Consider the following 310-residue polypeptide: Manganese ABC transporter substrate-binding lipoprotein PsaA (310 aa).

Positions 1-20 are cleaved as a signal peptide; the sequence is MKKIASVLALFVALLFGLLA. A lipid anchor (N-palmitoyl cysteine) is attached at Cys-21. Cys-21 is lipidated: S-diacylglycerol cysteine. His-68, His-140, Glu-206, and Asp-281 together coordinate Mn(2+).

It belongs to the bacterial solute-binding protein 9 family. Lipoprotein receptor antigen (Lrai) subfamily.

It is found in the cell membrane. Part of the ATP-binding cassette (ABC) transport system PsaABC involved in manganese import. Binds manganese with high affinity and specificity and delivers it to the membrane permease for translocation into the cytoplasm. Also acts as an adhesin which is involved on adherence to extracellular matrix. This is Manganese ABC transporter substrate-binding lipoprotein PsaA from Streptococcus pneumoniae.